Consider the following 226-residue polypeptide: MKEYRALLALLHLASPSLPIGAYTYSQGLESAIEQGLVRDETSAREWLVEMLGIFTDFELPILQRLLKAFSERDEAAVSFWTECFVASRETSEFRAETVQMGYSLAKLVIDLKLGDDSMRAILENQQAIPLPTAFACAAEALGIPHEESLLGMLFSMAENQVLACVKSVPLGQLSGQRLLLSLHPVIEACSIRASQLTDDELSSWAPGLSLLSMQHEVQYSRIYRS.

Belongs to the UreF family. UreD, UreF and UreG form a complex that acts as a GTP-hydrolysis-dependent molecular chaperone, activating the urease apoprotein by helping to assemble the nickel containing metallocenter of UreC. The UreE protein probably delivers the nickel.

The protein resides in the cytoplasm. Functionally, required for maturation of urease via the functional incorporation of the urease nickel metallocenter. The protein is Urease accessory protein UreF of Nitrosospira multiformis (strain ATCC 25196 / NCIMB 11849 / C 71).